Here is a 121-residue protein sequence, read N- to C-terminus: Large ribosomal subunit protein bL20 (121 aa).

The protein belongs to the bacterial ribosomal protein bL20 family.

Functionally, binds directly to 23S ribosomal RNA and is necessary for the in vitro assembly process of the 50S ribosomal subunit. It is not involved in the protein synthesizing functions of that subunit. The chain is Large ribosomal subunit protein bL20 from Dinoroseobacter shibae (strain DSM 16493 / NCIMB 14021 / DFL 12).